We begin with the raw amino-acid sequence, 183 residues long: Large ribosomal subunit protein uL5 (183 aa).

This sequence belongs to the universal ribosomal protein uL5 family. In terms of assembly, part of the 50S ribosomal subunit; part of the 5S rRNA/L5/L18/L25 subcomplex. Contacts the 5S rRNA and the P site tRNA. Forms a bridge to the 30S subunit in the 70S ribosome.

Functionally, this is one of the proteins that bind and probably mediate the attachment of the 5S RNA into the large ribosomal subunit, where it forms part of the central protuberance. In the 70S ribosome it contacts protein S13 of the 30S subunit (bridge B1b), connecting the 2 subunits; this bridge is implicated in subunit movement. Contacts the P site tRNA; the 5S rRNA and some of its associated proteins might help stabilize positioning of ribosome-bound tRNAs. The polypeptide is Large ribosomal subunit protein uL5 (Corynebacterium aurimucosum (strain ATCC 700975 / DSM 44827 / CIP 107346 / CN-1) (Corynebacterium nigricans)).